Here is a 903-residue protein sequence, read N- to C-terminus: Envelope glycoprotein B (903 aa).

A signal peptide spans 1 to 29 (MRQGAARGCRWFVVWALLGLTLGVLVASA). The segment covering 30–51 (APSSPGTPGVAAATQAANGGPA) has biased composition (low complexity). A disordered region spans residues 30-87 (APSSPGTPGVAAATQAANGGPATPAPPAPGPAPTGDTKPKKNKKPKNPPPPRPAGDNA). Residues 30–773 (APSSPGTPGV…SGVSSFMSNP (744 aa)) are Virion surface-facing. A compositionally biased stretch (pro residues) spans 52 to 61 (TPAPPAPGPA). N-linked (GlcNAc...) asparagine; by host glycosylation is found at N86 and N140. Intrachain disulfides connect C115/C572, C132/C528, C206/C270, C363/C411, and C595/C632. 2 involved in fusion and/or binding to host membrane regions span residues 172–178 (VWFGHRY) and 257–264 (RVEAFHRY). 2 N-linked (GlcNAc...) asparagine; by host glycosylation sites follow: N397 and N429. The tract at residues 469–491 (REQSRKPPNPTPPPPGASANASV) is disordered. Over residues 475–484 (PPNPTPPPPG) the composition is skewed to pro residues. An N-linked (GlcNAc...) asparagine; by host glycan is attached at N488. N673 carries an N-linked (GlcNAc...) asparagine; by host glycan. The tract at residues 718 to 771 (IDTVIHADANAAMFAGLGAFFEGMGDLGRAVGKVVMGIVGGVVSAVSGVSSFMS) is hydrophobic membrane proximal region. The chain crosses the membrane as a helical span at residues 774–794 (FGALAVGLLVLAGLAAAFFAF). The Intravirion segment spans residues 795–903 (RYVMRLQSNP…KDGDADEDDL (109 aa)). Positions 848–851 (YMAL) match the Golgi targeting motif. Residues 882–903 (KRRNTNYTQVPNKDGDADEDDL) form a disordered region. The Internalization motif signature appears at 888 to 891 (YTQV).

The protein belongs to the herpesviridae glycoprotein B family. As to quaternary structure, homotrimer; disulfide-linked. Interacts with host receptor MYH9/NMMHC-IIA. Interacts with host receptor MYH10/NMMHC-IIB. Interacts with the host coreceptor PILRA. Binds to heparan sulfate proteoglycans. Interacts with gH/gL heterodimer. Interacts with gD. Post-translationally, the cytoplasmic tail is phosphorylated by the viral kinase US3. Phosphorylation may be linked to a down-regulation of gB expression on cell surface. Ubiquitinated.

It localises to the virion membrane. It is found in the host cell membrane. The protein localises to the host endosome membrane. The protein resides in the host Golgi apparatus membrane. Functionally, envelope glycoprotein that forms spikes at the surface of virion envelope and binds to the host cell entry receptors MYH9/NMMHC-IIA and MYH10/NMMHC-IIB, promoting the virus entry into host cells. Essential for the initial attachment to heparan sulfate moieties of the host cell surface proteoglycans. Involved in fusion of viral and cellular membranes leading to virus entry into the host cell: following initial binding to its host cell entry receptors, membrane fusion is mediated by the fusion machinery composed at least of gB and the heterodimer gH/gL. May be involved in the fusion between the virion envelope and the outer nuclear membrane during virion egress. Also plays a role, together with gK, in virus-induced cell-to-cell fusion (syncytia formation). The polypeptide is Envelope glycoprotein B (Homo sapiens (Human)).